A 1483-amino-acid chain; its full sequence is Neuropathy target esterase sws (1483 aa).

The Lumenal segment spans residues 1 to 34; it reads MDVLELLRASANGCYNTLFSDAWFQYVSKQIATT. Residues 35–55 traverse the membrane as a helical segment; the sequence is MYWYGALLVIGVLFIAWFLYF. Topologically, residues 56 to 1483 are cytoplasmic; that stretch reads KRLARLRLRD…ENLTKTDTKN (1428 aa). 174 to 301 serves as a coordination point for a nucleoside 3',5'-cyclic phosphate; that stretch reads IFGHFEKPIF…IRVIQVIMIR (128 aa). 2 disordered regions span residues 348–380 and 404–440; these read ASRPVVRAPTSPNSRLSREEHTLSDPDPNPNAN and SSAVSVNQAGTRRSSTTYGPSGESPNGNANTAPGTSI. Over residues 413–440 the composition is skewed to polar residues; it reads GTRRSSTTYGPSGESPNGNANTAPGTSI. Phosphoserine occurs at positions 418 and 424. Residues 456–585 and 574–701 contribute to the a nucleoside 3',5'-cyclic phosphate site; these read ELGL…VVRR and IVLD…LSHR. A PNPLA domain is found at 927 to 1093; it reads LVLGGGGARG…VNNLPGHLWR (167 aa). Residues 931–936 carry the GXGXXG motif; it reads GGGARG. Positions 958 to 962 match the GXSXG motif; sequence GVSIG. The Nucleophile role is filled by Ser-960. Catalysis depends on Asp-1080, which acts as the Proton acceptor. The short motif at 1080–1082 is the DGA/G element; it reads DGG. At Ser-1174 the chain carries Phosphoserine. The interval 1349-1483 is disordered; that stretch reads DKATQSTPPT…ENLTKTDTKN (135 aa). Residues 1351-1373 are compositionally biased toward polar residues; the sequence is ATQSTPPTPNKQHALSPTSSQTN. The segment covering 1382 to 1396 has biased composition (basic and acidic residues); it reads KPKEKQPSYDKLDRE. Positions 1410–1419 are enriched in low complexity; sequence ERSSMQQRDS. A compositionally biased stretch (basic and acidic residues) spans 1445-1458; sequence LNKPEQQPEQKPVP. Residues 1465 to 1474 show a composition bias toward low complexity; the sequence is QKQQDQQQQE.

It belongs to the NTE family. In terms of assembly, interacts with Pka-C3; interaction inhibits the catalytic function of Pka-C3 and the esterase activity of sws.

It localises to the endoplasmic reticulum membrane. It catalyses the reaction a 1-acyl-sn-glycero-3-phosphocholine + H2O = sn-glycerol 3-phosphocholine + a fatty acid + H(+). Phospholipase B that deacylates intracellular phosphatidylcholine (PtdCho), generating glycerophosphocholine (GroPtdCho). This deacylation occurs at both sn-2 and sn-1 positions of PtdCho. Its specific chemical modification by certain organophosphorus (OP) compounds leads to distal axonopathy. Plays a role in the signaling mechanism between neurons and glia that regulates glia wrapping during development of the adult brain. Essential for membrane lipid homeostasis and cell survival in both neurons and glia of the adult brain. The chain is Neuropathy target esterase sws from Drosophila virilis (Fruit fly).